A 149-amino-acid polypeptide reads, in one-letter code: Immunoglobulin kappa chain variable 6-17 (149 aa).

Residues 1-29 (MHHTSMGIKMESQIQVFVFVFLWLSGVDG) form the signal peptide. 2 consecutive repeats follow at residues 26–35 (GVDGDIVMTQ) and 38–47 (GVDGDIVMTQ). The framework-1 stretch occupies residues 42–64 (DIVMTQSHKFMSTSVGDRVSITC). Residues 65–75 (KASQDVSTTVA) form a complementarity-determining-1 region. Residues 76–90 (WYQQKPGQSPKLLIY) form a framework-2 region. The tract at residues 91 to 97 (SASYRYT) is complementarity-determining-2. The segment at 98 to 129 (GVPDRFTGSGSGTDFTFTISSVQAEDLAVYYC) is framework-3. The tract at residues 130–138 (QQHYSTPPT) is complementarity-determining-3. Residues 139-148 (FGGGTKLEIK) form a framework-4 region.

The polypeptide is Immunoglobulin kappa chain variable 6-17 (Mus musculus (Mouse)).